Reading from the N-terminus, the 426-residue chain is MTEELFSNSETCSLSDPLTSKTLSSIENPFDDPYILSEESEILTIKTDVLRPNILNRKSSFYPEADAPVRKSNLQVKKIFENQVLNCDGIKVAITIPDTSLIAGSLLHGNIWLSYEGAKNVETGVWIKEMFLDFYGILNFKGHSEPFYSISEKYSFCNLKTSALILSKAASASIGNKGLFLKCSCKVGFPFSFIVPLDIGPGTYHSSKLELLYYISSTLTLTSLDQNIRCTRCTIPKRVITSMHNNIAELYNPISCIKSLPYLSLEEAKTTLEVHTDRSLFFSGQIIDFTICYTHNHHRRIHNIKARLLETHIFHPNTQNHYGGYCMNQAEETFASCGYLKRYQKTKTKTRAKSTWKIANKSVYSNLAPTLKNTIHAQIKIPEFCRSVNLKDQLKIDYTLEVCFSAFFKPRILSIQIPITILHSWN.

This sequence belongs to the arrestin family.

It localises to the cytoplasm. The protein localises to the nucleus. In terms of biological role, has a role in meiosis. This is Meiotically up-regulated gene 170 protein (mug170) from Schizosaccharomyces pombe (strain 972 / ATCC 24843) (Fission yeast).